The chain runs to 332 residues: 5-dehydro-2-deoxygluconokinase 2 (332 aa).

The protein belongs to the carbohydrate kinase PfkB family.

The catalysed reaction is 5-dehydro-2-deoxy-D-gluconate + ATP = 6-phospho-5-dehydro-2-deoxy-D-gluconate + ADP + H(+). It participates in polyol metabolism; myo-inositol degradation into acetyl-CoA; acetyl-CoA from myo-inositol: step 5/7. In terms of biological role, catalyzes the phosphorylation of 5-dehydro-2-deoxy-D-gluconate (2-deoxy-5-keto-D-gluconate or DKG) to 6-phospho-5-dehydro-2-deoxy-D-gluconate (DKGP). This is 5-dehydro-2-deoxygluconokinase 2 from Bacillus cereus (strain ZK / E33L).